The chain runs to 245 residues: Uroporphyrinogen-III C-methyltransferase (245 aa).

S-adenosyl-L-homocysteine contacts are provided by residues Pro-12, 87-89 (GGD), 117-118 (TA), Met-168, Ala-197, and Ala-225.

It belongs to the precorrin methyltransferase family.

The catalysed reaction is uroporphyrinogen III + 2 S-adenosyl-L-methionine = precorrin-2 + 2 S-adenosyl-L-homocysteine + H(+). It participates in cofactor biosynthesis; adenosylcobalamin biosynthesis; precorrin-2 from uroporphyrinogen III: step 1/1. The protein operates within porphyrin-containing compound metabolism; siroheme biosynthesis; precorrin-2 from uroporphyrinogen III: step 1/1. Functionally, catalyzes the two successive C-2 and C-7 methylation reactions involved in the conversion of uroporphyrinogen III to precorrin-2 via the intermediate formation of precorrin-1. It is a step in the biosynthesis of both cobalamin (vitamin B12) and siroheme. This chain is Uroporphyrinogen-III C-methyltransferase (cobA), found in Pseudomonas aeruginosa (strain ATCC 15692 / DSM 22644 / CIP 104116 / JCM 14847 / LMG 12228 / 1C / PRS 101 / PAO1).